The chain runs to 260 residues: Ribosome maturation factor RimP (260 aa).

The segment at 198–260 (QSLGILPPPP…RGDIDPIEGE (63 aa)) is disordered. Basic and acidic residues-rich tracts occupy residues 210–228 (AKTD…ENGK) and 238–254 (NTKE…RGDI).

This sequence belongs to the RimP family.

The protein resides in the cytoplasm. Required for maturation of 30S ribosomal subunits. In Nitrobacter winogradskyi (strain ATCC 25391 / DSM 10237 / CIP 104748 / NCIMB 11846 / Nb-255), this protein is Ribosome maturation factor RimP.